Reading from the N-terminus, the 441-residue chain is Coiled-coil domain-containing protein 91 (441 aa).

Positions 1-16 (MDDDDFGGFEAAETFD) are GGA1-binding motif. The tract at residues 1–26 (MDDDDFGGFEAAETFDGGSGETQTTS) is disordered. 2 positions are modified to phosphoserine: serine 43 and serine 46. Coiled coils occupy residues 130–209 (SNIQ…GHEA) and 249–407 (ELLN…KRLD). The interval 210 to 413 (LSIIVDEYKA…KRLDQVIRQR (204 aa)) is homodimerization.

As to quaternary structure, homodimer. Interacts with GGA1, GGA2 and AP1G1. Widely expressed.

It is found in the membrane. It localises to the golgi apparatus. The protein localises to the trans-Golgi network membrane. The protein resides in the trans-Golgi network. Functionally, involved in the regulation of membrane traffic through the trans-Golgi network (TGN). Functions in close cooperation with the GGAs in the sorting of hydrolases to lysosomes. In Homo sapiens (Human), this protein is Coiled-coil domain-containing protein 91 (CCDC91).